Reading from the N-terminus, the 143-residue chain is UPF0201 protein PAE1632 (143 aa).

The protein belongs to the UPF0201 family.

The chain is UPF0201 protein PAE1632 from Pyrobaculum aerophilum (strain ATCC 51768 / DSM 7523 / JCM 9630 / CIP 104966 / NBRC 100827 / IM2).